Consider the following 471-residue polypeptide: F-box only protein 3 (471 aa).

Residues 10 to 56 (PLTLESLPTDPLLLILSFLDYRDLINCCYVSRRLSQLSSHDPLWRRH) enclose the F-box domain. In terms of domain architecture, ApaG spans 278–408 (VATTGDITVS…FHMACPTFRV (131 aa)). Residues 419-451 (EYEEMEEEEEEEEEEDEDDDSADMDESDEDDEE) are compositionally biased toward acidic residues. Positions 419-455 (EYEEMEEEEEEEEEEDEDDDSADMDESDEDDEEERRR) are disordered.

In terms of assembly, part of a SCF (SKP1-cullin-F-box) protein ligase complex SCF(FBXO3) consisting of FBXO3, SKP1, CUL1 and RBX1. Interacts with PML, interaction is direct and takes place either alone or within the SCF complex. As to quaternary structure, (Microbial infection) Interacts (via ApaG domain) with Rift valley fever virus NSs helical filament; this interaction forms a filamentous E3 which mediates degradation of TFIIH complex through interaction with GT2H1.

The protein resides in the nucleus. Its pathway is protein modification; protein ubiquitination. In terms of biological role, substrate recognition component of the SCF (SKP1-CUL1-F-box protein)-type E3 ubiquitin ligase complex, SCF(FBXO3), which mediates the ubiquitination and subsequent proteasomal degradation of target proteins. Mediates the ubiquitination of HIPK2 and probably that of EP300, leading to rapid degradation by the proteasome. In the presence of PML, HIPK2 ubiquitination still occurs, but degradation is prevented. PML, HIPK2 and FBXO3 may act synergically to activate p53/TP53-dependent transactivation. The SCF(FBXO3) also acts as a regulator of inflammation by mediating ubiquitination and degradation of FBXL2 in response to lipopolysaccharide (LPS). The SCF(FBXO3) complex specifically recognizes FBXL2 phosphorylated at 'Thr-404' and promotes its ubiquitination. (Microbial infection) Associates with the Rift valley fever virus NSs to form a remodeled E3 ligase that triggers efficient proteasomal degradation of targeted proteins. The filamentous E3 ligase targets the TFIIH complex leading to robust inhibition of antiviral immunity and enhances viral pathogenesis. The protein is F-box only protein 3 of Homo sapiens (Human).